Reading from the N-terminus, the 35-residue chain is Photosystem II reaction center protein M (35 aa).

A helical membrane pass occupies residues 5–25 (ILAFIATALFIIIPTAFLLIL).

The protein belongs to the PsbM family. PSII is composed of 1 copy each of membrane proteins PsbA, PsbB, PsbC, PsbD, PsbE, PsbF, PsbH, PsbI, PsbJ, PsbK, PsbL, PsbM, PsbT, PsbX, PsbY, PsbZ, Psb30/Ycf12, at least 3 peripheral proteins of the oxygen-evolving complex and a large number of cofactors. It forms dimeric complexes.

The protein localises to the plastid. It localises to the chloroplast thylakoid membrane. Functionally, one of the components of the core complex of photosystem II (PSII). PSII is a light-driven water:plastoquinone oxidoreductase that uses light energy to abstract electrons from H(2)O, generating O(2) and a proton gradient subsequently used for ATP formation. It consists of a core antenna complex that captures photons, and an electron transfer chain that converts photonic excitation into a charge separation. This subunit is found at the monomer-monomer interface. The sequence is that of Photosystem II reaction center protein M from Chara vulgaris (Common stonewort).